Consider the following 804-residue polypeptide: Leucine--tRNA ligase (804 aa).

The short motif at 39-50 is the 'HIGH' region element; sequence PYPSGAGLHVGH. The 'KMSKS' region signature appears at 580-584; that stretch reads KMSKS. K583 is an ATP binding site.

This sequence belongs to the class-I aminoacyl-tRNA synthetase family.

Its subcellular location is the cytoplasm. It carries out the reaction tRNA(Leu) + L-leucine + ATP = L-leucyl-tRNA(Leu) + AMP + diphosphate. This is Leucine--tRNA ligase from Mycoplasma mycoides subsp. mycoides SC (strain CCUG 32753 / NCTC 10114 / PG1).